Here is a 460-residue protein sequence, read N- to C-terminus: Bifunctional protein GlmU (460 aa).

A pyrophosphorylase region spans residues 1 to 235; it reads MALSAAIILA…PLSVEGVNDR (235 aa). Residues 9–12, Lys-23, Gln-76, and 81–82 contribute to the UDP-N-acetyl-alpha-D-glucosamine site; these read LAAG and GT. Asp-109 is a Mg(2+) binding site. Positions 146, 161, 176, and 233 each coordinate UDP-N-acetyl-alpha-D-glucosamine. Residue Asn-233 participates in Mg(2+) binding. The tract at residues 236–256 is linker; the sequence is VQLAALAKAHNKRVCEHWMRE. Residues 257–460 are N-acetyltransferase; the sequence is GVTILDPDTT…VEGWKPEWER (204 aa). Residues Arg-338 and Lys-356 each contribute to the UDP-N-acetyl-alpha-D-glucosamine site. Residue His-368 is the Proton acceptor of the active site. The UDP-N-acetyl-alpha-D-glucosamine site is built by Tyr-371 and Asn-382. Residues 391 to 392 and Ala-428 each bind acetyl-CoA; that span reads NY.

This sequence in the N-terminal section; belongs to the N-acetylglucosamine-1-phosphate uridyltransferase family. It in the C-terminal section; belongs to the transferase hexapeptide repeat family. In terms of assembly, homotrimer. The cofactor is Mg(2+).

Its subcellular location is the cytoplasm. The catalysed reaction is alpha-D-glucosamine 1-phosphate + acetyl-CoA = N-acetyl-alpha-D-glucosamine 1-phosphate + CoA + H(+). It carries out the reaction N-acetyl-alpha-D-glucosamine 1-phosphate + UTP + H(+) = UDP-N-acetyl-alpha-D-glucosamine + diphosphate. It functions in the pathway nucleotide-sugar biosynthesis; UDP-N-acetyl-alpha-D-glucosamine biosynthesis; N-acetyl-alpha-D-glucosamine 1-phosphate from alpha-D-glucosamine 6-phosphate (route II): step 2/2. The protein operates within nucleotide-sugar biosynthesis; UDP-N-acetyl-alpha-D-glucosamine biosynthesis; UDP-N-acetyl-alpha-D-glucosamine from N-acetyl-alpha-D-glucosamine 1-phosphate: step 1/1. Its pathway is bacterial outer membrane biogenesis; LPS lipid A biosynthesis. Catalyzes the last two sequential reactions in the de novo biosynthetic pathway for UDP-N-acetylglucosamine (UDP-GlcNAc). The C-terminal domain catalyzes the transfer of acetyl group from acetyl coenzyme A to glucosamine-1-phosphate (GlcN-1-P) to produce N-acetylglucosamine-1-phosphate (GlcNAc-1-P), which is converted into UDP-GlcNAc by the transfer of uridine 5-monophosphate (from uridine 5-triphosphate), a reaction catalyzed by the N-terminal domain. This is Bifunctional protein GlmU from Bifidobacterium adolescentis (strain ATCC 15703 / DSM 20083 / NCTC 11814 / E194a).